Here is a 1488-residue protein sequence, read N- to C-terminus: Chromosome partition protein MukB (1488 aa).

34-41 (GGNGAGKS) provides a ligand contact to ATP. Coiled coils occupy residues 326–413 (LEAD…QTRA), 444–472 (LDTF…QTAH), and 509–602 (RHLA…RRAP). The flexible hinge stretch occupies residues 666 to 783 (PGGAEDQRLN…SLPIFGRAAR (118 aa)). Coiled-coil stretches lie at residues 835–923 (EAEI…AKLE), 977–1116 (EMLS…AKAG), and 1209–1265 (VEAI…LQSV).

This sequence belongs to the SMC family. MukB subfamily. Homodimerization via its hinge domain. Binds to DNA via its C-terminal region. Interacts, and probably forms a ternary complex, with MukE and MukF via its C-terminal region. The complex formation is stimulated by calcium or magnesium. Interacts with tubulin-related protein FtsZ.

It is found in the cytoplasm. The protein resides in the nucleoid. Plays a central role in chromosome condensation, segregation and cell cycle progression. Functions as a homodimer, which is essential for chromosome partition. Involved in negative DNA supercoiling in vivo, and by this means organize and compact chromosomes. May achieve or facilitate chromosome segregation by condensation DNA from both sides of a centrally located replisome during cell division. The sequence is that of Chromosome partition protein MukB from Salmonella paratyphi C (strain RKS4594).